Here is a 126-residue protein sequence, read N- to C-terminus: Phosphoribosyl-AMP cyclohydrolase (126 aa).

Asp76 contacts Mg(2+). Cys77 contributes to the Zn(2+) binding site. Positions 78 and 80 each coordinate Mg(2+). The Zn(2+) site is built by Cys94 and Cys101.

Belongs to the PRA-CH family. As to quaternary structure, homodimer. It depends on Mg(2+) as a cofactor. Requires Zn(2+) as cofactor.

The protein localises to the cytoplasm. The enzyme catalyses 1-(5-phospho-beta-D-ribosyl)-5'-AMP + H2O = 1-(5-phospho-beta-D-ribosyl)-5-[(5-phospho-beta-D-ribosylamino)methylideneamino]imidazole-4-carboxamide. Its pathway is amino-acid biosynthesis; L-histidine biosynthesis; L-histidine from 5-phospho-alpha-D-ribose 1-diphosphate: step 3/9. In terms of biological role, catalyzes the hydrolysis of the adenine ring of phosphoribosyl-AMP. The polypeptide is Phosphoribosyl-AMP cyclohydrolase (Nitratidesulfovibrio vulgaris (strain ATCC 29579 / DSM 644 / CCUG 34227 / NCIMB 8303 / VKM B-1760 / Hildenborough) (Desulfovibrio vulgaris)).